Reading from the N-terminus, the 877-residue chain is Transcriptional corepressor SEUSS (877 aa).

2 disordered regions span residues 1–42 (MVPS…VSPR) and 272–295 (LKSM…PLRP). The segment covering 272–292 (LKSMPQQRPQLPQQFQQQNLP) has biased composition (low complexity). The tract at residues 321–563 (PEDNNIEFWR…ETRTGPIESL (243 aa)) is dimerization. The Nuclear localization signal motif lies at 330–344 (RKFVAEYFAPNAKKR). Disordered regions lie at residues 560-599 (IESL…QQQQ), 612-633 (QQTV…LMQG), and 666-753 (GRHQ…NESS). Positions 582–618 (QQASDQLRQQQQQQQQQQQQQQQQQQQQQQQQTVSQN) form a coiled coil. The span at 590-599 (QQQQQQQQQQ) shows a compositional bias: low complexity. Over residues 614–633 (TVSQNTNSDQSSRQVALMQG) the composition is skewed to polar residues. Composition is skewed to low complexity over residues 688 to 703 (QSPS…SSQQ) and 711 to 725 (QSPT…PSQN). Residues 726 to 741 (GIPSVNHMGSTNSPAM) are compositionally biased toward polar residues.

Belongs to the adn1/SEU family. As to quaternary structure, forms a corepressor complex with LUG; LUG is the transcription repressor subunit and SEU the specific DNA-binding adapter. Interacts with AGL24-AP1 and SVP-AP1 dimers when complexed to SEU. Interacts with AP1/AGL7 and SEP3/AGL9. Binds to LUH. In terms of tissue distribution, expressed in root, leaves, seedlings, vegetative and reproductive shoot apical meristems, seeds, floral meristems and all floral organs.

The protein localises to the nucleus. The protein resides in the nucleoplasm. DNA-binding adapter subunit of the SEU-LUG transcriptional corepressor of the C class floral homeotic gene AGAMOUS during the early stages of floral meristem development. Is part of the A class cadastral complex that define the boundaries between the A and C class homeotic genes expression and function. Interacts together with APETALA2 and LEUNIG to repress AGAMOUS expression. In association with LUG, regulates petal shape through AGAMOUS-independent mechanisms. Controls cell division during petal development and enable the proper patterning of petal blade vasculature. Required for the proper elaboration of petal polarity along the adaxial/abaxial axis. May act through direct or indirect regulation of PHABULOSA and YAB1 and thus regulate cellular proliferation within the developing petal blade. In association with AINTEGUMENTA (ANT), coordinates patterning cues and cellular proliferation along the three positional axes of the developing gynoecium. Required for the development of the medial ridge and subsequent ovule initiation. The sequence is that of Transcriptional corepressor SEUSS (SEU) from Arabidopsis thaliana (Mouse-ear cress).